A 498-amino-acid chain; its full sequence is Isoflavone 2'-hydroxylase (498 aa).

Residues Ile3–Leu23 traverse the membrane as a helical segment. Cys436 contacts heme.

Belongs to the cytochrome P450 family. Requires heme as cofactor. In terms of tissue distribution, expressed constitutively in roots, but present at very low levels in uninfected stems and leaves.

It localises to the endoplasmic reticulum membrane. The enzyme catalyses formononetin + reduced [NADPH--hemoprotein reductase] + O2 = 2'-hydroxyformononetin + oxidized [NADPH--hemoprotein reductase] + H2O + H(+). Its function is as follows. Involved in the biosynthesis of the pterocarpin phytoalexins. Acts on isoflavones with a 4'-methoxy group on the B-ring, such as formononetin and biochanin A, and on pseudobaptigenin. Has a low activity with daidzein and genistein and no activity with the 7-O-methylated isoflavonoids isoformononetin and prunetin. This is Isoflavone 2'-hydroxylase from Medicago truncatula (Barrel medic).